A 264-amino-acid chain; its full sequence is Short chain dehydrogenase/reductase nsrJ (264 aa).

NADP(+) is bound by residues isoleucine 24, aspartate 70, asparagine 97, and arginine 130. Catalysis depends on proton donor residues serine 146 and serine 147. NADP(+) contacts are provided by tyrosine 161, lysine 165, and threonine 196. The active-site Proton acceptor is the tyrosine 161. Residue lysine 165 is the Lowers pKa of active site Tyr of the active site.

This sequence belongs to the short-chain dehydrogenases/reductases (SDR) family.

Its pathway is secondary metabolite biosynthesis. Its function is as follows. Short chain dehydrogenase/reductase; part of the gene cluster that mediates the biosynthesis of the tetrahydroxanthone dimer neosartorin, which exhibits antibacterial activity. The two different monomeric units appear to be synthesized by the same set of enzymes, among which the Baeyer-Villiger monooxygenase nsrF is the key enzyme for the divergence of the biosynthetic routes. The pathway begins with the synthesis of atrochrysone thioester by the polyketide synthase nsrB. The atrochrysone carboxyl ACP thioesterase nsrC then breaks the thioester bond and releases the atrochrysone carboxylic acid from AacuL. Atrochrysone carboxylic acid is decarboxylated by the decarboxylase nsrE, and oxidized by the anthrone oxygenase nsrD to yield emodin. Emodin is then reduced to emodin hydroquinone by the oxidoreductase nsrR. A-ring reduction by the short chain dehydrogenase nsrJ, dehydration by the scytalone dehydratase-like protein nsrI and probable spontaneous re-oxidation, results in overall deoxygenation to chrysophanol. The Baeyer-Villiger monooxygenase nsrF accepts chrysophanol as a substrate to insert one oxygen atom at two different positions to yield the precursors of both monomric units. NsrF is promiscuous/flexible in interacting with the 2 (non methylated and methylated) aromatic rings of chrysophanol, thus diverging the biosynthetic pathway at this point. After the hydrolysis of the lactones, methylesterification by the methyltransferase nsrG yields respectively moniliphenone and 2,2',6'-trihydroxy-4-methyl-6-methoxya-cyldiphenylmethanone. The next steps are the hydroxylation by the FAD-dependent monooxygenase nsrK, followed by isomerization by the monooxygenase nsrQ. The short chain dehydrogenase/reductase nsrO then catalyzes the C-5 ketoreduction to give the xanthone skeleton of blennolide C and 5-acetylblennolide A. The acetyltransferase nsrL has a strict substrate specificity and uses only blennolide A but not blennolide C to yield 5-acetylblennolide A as the single-acetylated product. In the final step of the biosynthesis, the heterodimerization of the 2 xanthones, blennolide C and 5-acetylblennolide A, is catalyzed by the cytochrome P450 monooxygenase nsrP. NsrP can utilize at least three different xanthones as its substrates to perform the dimerization reaction. The polypeptide is Short chain dehydrogenase/reductase nsrJ (Aspergillus novofumigatus (strain IBT 16806)).